An 85-amino-acid polypeptide reads, in one-letter code: Large ribosomal subunit protein bL31B (85 aa).

The protein belongs to the bacterial ribosomal protein bL31 family. Type B subfamily. As to quaternary structure, part of the 50S ribosomal subunit.

The sequence is that of Large ribosomal subunit protein bL31B from Staphylococcus epidermidis (strain ATCC 35984 / DSM 28319 / BCRC 17069 / CCUG 31568 / BM 3577 / RP62A).